The sequence spans 264 residues: uncharacterized protein (264 aa).

Disordered regions lie at residues 1 to 52 and 123 to 207; these read MPRS…AVPG and GGRW…PWTR. Over residues 29–40 the composition is skewed to low complexity; that stretch reads AAHPTTSPTAAS. Polar residues predominate over residues 144–154; sequence HFQSSGAQQES. Residues 188-197 show a composition bias toward basic residues; it reads ARKSACKCPR.

This is an uncharacterized protein from Homo sapiens (Human).